We begin with the raw amino-acid sequence, 813 residues long: ATP-dependent zinc metalloprotease FTSH 10, mitochondrial (813 aa).

The transit peptide at 1–86 (MIFSKLGSSL…FANPRLRRFF (86 aa)) directs the protein to the mitochondrion. The segment at 93–129 (KKNYENYYPKDSKKAPKNEQKSESRDGSKKNENENAG) is disordered. Over residues 94 to 125 (KNYENYYPKDSKKAPKNEQKSESRDGSKKNEN) the composition is skewed to basic and acidic residues. The chain crosses the membrane as a helical span at residues 139–157 (MLIPLMAIALILSTFSLGS). 367–374 (GPPGTGKT) lines the ATP pocket. Zn(2+) is bound at residue His-592. Glu-593 is a catalytic residue. Zn(2+) contacts are provided by His-596 and Asp-668. The span at 764 to 790 (RPFKSGETTNYDRFKSGFEESEKESQK) shows a compositional bias: basic and acidic residues. Residues 764 to 813 (RPFKSGETTNYDRFKSGFEESEKESQKESVPVKPVEDDGIPPLEPQVVPT) are disordered.

In the N-terminal section; belongs to the AAA ATPase family. It in the C-terminal section; belongs to the peptidase M41 family. Requires Zn(2+) as cofactor.

The protein localises to the mitochondrion inner membrane. Probable ATP-dependent zinc metallopeptidase. Involved in the assembly and/or stability of the complexes I and V of the mitochondrial oxidative phosphorylation system. This Arabidopsis thaliana (Mouse-ear cress) protein is ATP-dependent zinc metalloprotease FTSH 10, mitochondrial (FTSH10).